The chain runs to 246 residues: Azurocidin (246 aa).

Positions 1-19 are cleaved as a signal peptide; it reads MPALRFLALLASLLATSRV. Positions 20-26 are excised as a propeptide; that stretch reads GLATLAD. The Peptidase S1 domain maps to 27-242; the sequence is IVGGRRAQPQ…FRNWIDSVLN (216 aa). The cysteines at positions 52 and 68 are disulfide-linked. Residues asparagine 139 and asparagine 170 are each glycosylated (N-linked (GlcNAc...) asparagine). Intrachain disulfides connect cysteine 148-cysteine 205 and cysteine 178-cysteine 184. Positions 245-246 are excised as a propeptide; the sequence is PA.

Belongs to the peptidase S1 family. Elastase subfamily.

The protein resides in the cytoplasmic granule membrane. This is a neutrophil granule-derived antibacterial and monocyte- and fibroblast-specific chemotactic glycoprotein. Binds heparin. The polypeptide is Azurocidin (Sus scrofa (Pig)).